The chain runs to 416 residues: D-amino acid dehydrogenase (416 aa).

3 to 17 (VIVLGAGIIGVTSAY) is a binding site for FAD.

The protein belongs to the DadA oxidoreductase family. It depends on FAD as a cofactor.

It carries out the reaction a D-alpha-amino acid + A + H2O = a 2-oxocarboxylate + AH2 + NH4(+). It participates in amino-acid degradation; D-alanine degradation; NH(3) and pyruvate from D-alanine: step 1/1. Its function is as follows. Oxidative deamination of D-amino acids. The protein is D-amino acid dehydrogenase of Sinorhizobium medicae (strain WSM419) (Ensifer medicae).